Reading from the N-terminus, the 329-residue chain is Elongation factor Ts (329 aa).

Residues 79–82 (TDFV) form an involved in Mg(2+) ion dislocation from EF-Tu region.

This sequence belongs to the EF-Ts family.

The protein localises to the cytoplasm. Its function is as follows. Associates with the EF-Tu.GDP complex and induces the exchange of GDP to GTP. It remains bound to the aminoacyl-tRNA.EF-Tu.GTP complex up to the GTP hydrolysis stage on the ribosome. This chain is Elongation factor Ts, found in Phocaeicola vulgatus (strain ATCC 8482 / DSM 1447 / JCM 5826 / CCUG 4940 / NBRC 14291 / NCTC 11154) (Bacteroides vulgatus).